A 283-amino-acid chain; its full sequence is Thymidylate synthase (283 aa).

Arg22 contributes to the dUMP binding site. Cys160 (nucleophile) is an active-site residue. DUMP is bound by residues 180–183, Asn191, and 221–223; these read RSCD and HIY. Asp183 contributes to the (6R)-5,10-methylene-5,6,7,8-tetrahydrofolate binding site. A (6R)-5,10-methylene-5,6,7,8-tetrahydrofolate-binding site is contributed by Ala282.

The protein belongs to the thymidylate synthase family. Bacterial-type ThyA subfamily. Homodimer.

Its subcellular location is the cytoplasm. The enzyme catalyses dUMP + (6R)-5,10-methylene-5,6,7,8-tetrahydrofolate = 7,8-dihydrofolate + dTMP. The protein operates within pyrimidine metabolism; dTTP biosynthesis. In terms of biological role, catalyzes the reductive methylation of 2'-deoxyuridine-5'-monophosphate (dUMP) to 2'-deoxythymidine-5'-monophosphate (dTMP) while utilizing 5,10-methylenetetrahydrofolate (mTHF) as the methyl donor and reductant in the reaction, yielding dihydrofolate (DHF) as a by-product. This enzymatic reaction provides an intracellular de novo source of dTMP, an essential precursor for DNA biosynthesis. The polypeptide is Thymidylate synthase (Idiomarina loihiensis (strain ATCC BAA-735 / DSM 15497 / L2-TR)).